The sequence spans 141 residues: Ly6/PLAUR domain-containing protein 1 (141 aa).

A signal peptide spans methionine 1–alanine 20. 6 disulfides stabilise this stretch: cysteine 25–cysteine 54, cysteine 28–cysteine 37, cysteine 46–cysteine 71, cysteine 77–cysteine 100, cysteine 88–cysteine 97, and cysteine 101–cysteine 106. The UPAR/Ly6 domain maps to cysteine 25–glycine 108. N-linked (GlcNAc...) asparagine glycosylation occurs at asparagine 45. Glycine 115 carries GPI-anchor amidated glycine lipidation. Residues serine 116–cysteine 141 constitute a propeptide, removed in mature form.

As to quaternary structure, interacts with CHRNA4 and nAChRs containing alpha-4:beta-2 (CHRNA4:CHRNB2) and alpha-7 (CHRNA7) subunits.

Its subcellular location is the cell membrane. Believed to act as a modulator of nicotinic acetylcholine receptors (nAChRs) activity. In vitro increases receptor desensitization and decreases affinity for ACh of alpha-4:beta-2-containing nAChRs. May play a role in the intracellular trafficking of alpha-4:beta-2 and alpha-7-containing nAChRs and may inhibit their expression at the cell surface. May be involved in the control of anxiety. The polypeptide is Ly6/PLAUR domain-containing protein 1 (Lypd1) (Rattus norvegicus (Rat)).